The following is a 64-amino-acid chain: Conotoxin reg3k (64 aa).

A signal peptide spans 1-20; the sequence is MMFKLGVLLTICLLLFPLTA. The propeptide occupies 21–48; the sequence is LQLDWDQPGDHMLDISSEIDDRWFDPVR. Disulfide bonds link Cys-50/Cys-60, Cys-51/Cys-58, and Cys-56/Cys-61. Pro-59 carries the post-translational modification 4-hydroxyproline.

As to expression, expressed by the venom duct.

Its subcellular location is the secreted. The protein is Conotoxin reg3k of Conus regius (Crown cone).